A 1588-amino-acid polypeptide reads, in one-letter code: Ubiquitin carboxyl-terminal hydrolase 54 (1588 aa).

R12 is modified (omega-N-methylarginine). The region spanning 31-352 is the USP domain; sequence KGLSNEPGQN…QPLLLLYADP (322 aa). C42 (nucleophile) is an active-site residue. The Zn(2+) site is built by H67, C69, C74, C77, H133, C145, C150, H153, C166, C169, C225, and C229. The active-site Proton acceptor is H302. 2 stretches are compositionally biased toward basic and acidic residues: residues 382-391 and 424-434; these read GHLTDSECNQ and SEGETLKEKQA. Disordered stretches follow at residues 382 to 519, 555 to 577, and 601 to 624; these read GHLT…PTWR, FTPD…RSQH, and ESGY…PPDS. S424 is subject to Phosphoserine. Over residues 453 to 471 the composition is skewed to polar residues; the sequence is TVSNMIHSRPSLASQTSAG. Residues 499-513 show a composition bias toward low complexity; the sequence is TESTSSEAKSSSSSK. Over residues 555-572 the composition is skewed to basic and acidic residues; sequence FTPDEVSKPTANDIKDGG. Positions 601–616 are enriched in low complexity; the sequence is ESGYESSERNSSSPVS. 2 positions are modified to phosphoserine: S613 and S616. Positions 682 to 712 form a coiled coil; that stretch reads ELDELQEEVVRRAQEQELRKKREKELEAAKG. Disordered stretches follow at residues 801 to 834, 1089 to 1182, 1221 to 1242, and 1491 to 1561; these read RSLQ…PQPT, QNTS…PDMY, SQVK…SHPR, and WGNL…RSPG. Positions 808–826 are enriched in low complexity; sequence QQQASSQQPVQPSASLPSQ. Residues 1126 to 1147 are compositionally biased toward basic and acidic residues; the sequence is GREHCRWVKQPRSPDGRERPPC. Position 1138 is a phosphoserine (S1138). Residues 1510-1524 show a composition bias toward polar residues; the sequence is PSSNLHVPLRSTWNS. Basic and acidic residues predominate over residues 1536–1547; sequence RRIDMPPDDDWR.

It belongs to the peptidase C19 family.

The enzyme catalyses Thiol-dependent hydrolysis of ester, thioester, amide, peptide and isopeptide bonds formed by the C-terminal Gly of ubiquitin (a 76-residue protein attached to proteins as an intracellular targeting signal).. Functionally, deubiquitinase that specifically mediates 'Lys-63'-linked deubiquitination of substrates with a polyubiquitin chain composed of at least 3 ubiquitins. Specifically recognizes ubiquitin chain in position S2 and catalyzes cleavage of polyubiquitin within 'Lys-63'-linked chains. Not able to deubiquitinate substrates with shorter ubiquitin chains. Mediates deubiquitination of PLK4, maintaining PLK4 stability by reducing its ubiquitination-mediated degradation. This chain is Ubiquitin carboxyl-terminal hydrolase 54 (Usp54), found in Mus musculus (Mouse).